A 429-amino-acid chain; its full sequence is Proton extrusion protein PxcA (429 aa).

Residues 139-161 form a disordered region; the sequence is LNGPEAPQTNGDRPDNKPKVETV. Basic and acidic residues predominate over residues 150 to 161; the sequence is DRPDNKPKVETV. Helical transmembrane passes span 211-231, 306-326, 353-373, and 389-409; these read FLLTLVIVPLLVHQLAKIAIT, AYENIFSDIFSFFAFVGILLI, LIILFTDIFVGYHSPHGWEII, and FNFLFIATFPVILDTVLKYWI.

This sequence belongs to the CemA family.

The protein resides in the cell inner membrane. Functionally, required for H(+) efflux immediately after light irradiation to form a rapid H(+) concentration gradient across the thylakoid membranes. Together with PxcL, contributes to transient H(+) uptake following dark to light transition. This Picosynechococcus sp. (strain ATCC 27264 / PCC 7002 / PR-6) (Agmenellum quadruplicatum) protein is Proton extrusion protein PxcA.